The chain runs to 280 residues: Dimethylglycine N-methyltransferase (280 aa).

The protein belongs to the methyltransferase superfamily. In terms of assembly, monomer.

The catalysed reaction is N,N-dimethylglycine + S-adenosyl-L-methionine = glycine betaine + S-adenosyl-L-homocysteine + H(+). Its pathway is amine and polyamine biosynthesis; betaine biosynthesis via glycine pathway; betaine from glycine: step 3/3. Functionally, catalyzes the methylation of dimethylglycine to betaine with S-adenosylmethionine (AdoMet) acting as the methyl donor. It has strict specificity for dimethylglycine as the methyl group acceptors. This is Dimethylglycine N-methyltransferase from Parasynechococcus marenigrum (strain WH8102).